The primary structure comprises 429 residues: MKQEIKPATGRLGVLVVGVGGAVATTMIVGTLASRKGLAKPIGSITQLATMRMENNEEKLIKDVVPLTDLNDIVFGGWDIFPDNAYEAAMYAEVLKEKDLNGVKDELEAIKPMPAAFDHNWAKRLNGTHIKKAATRWEMVEQLRQDIRDFKAANNCERVVVLWAASTEIYIPLSDEHMSLAALEKAMKDNNTEVISPSMCYAYAAIAEDAPFVMGAPNLCVDTPAMWEFSKQKNVPISGKDFKSGQTLMKTVLAPMFKTRMLGVNGWFSTNILGNRDGEVLDDPDNFKTKEVSKLSVIDTIFEPEKYPDLYGDVYHKVRINYYPPRKDNKEAWDNIDIFGWMGYPMEIKVNFLCRDSILAAPIALDLVLFSDLAMRAGMCGIQTWLSFFCKSPMHDFEHQPEHDLFTQWRMVKQTLRNMIGEKEPDYLA.

A helical membrane pass occupies residues 12-32 (LGVLVVGVGGAVATTMIVGTL). NAD(+) is bound by residues A22, V23, D79, A116, A165, T167, Y201, S244, R276, D277, and K290.

This sequence belongs to the myo-inositol 1-phosphate synthase family. As to quaternary structure, homotetramer. Requires NAD(+) as cofactor.

The protein localises to the membrane. The enzyme catalyses D-glucose 6-phosphate = 1D-myo-inositol 3-phosphate. The protein operates within polyol metabolism; myo-inositol biosynthesis; myo-inositol from D-glucose 6-phosphate: step 1/2. Functionally, key enzyme in myo-inositol biosynthesis pathway that catalyzes the conversion of glucose 6-phosphate to 1D-myo-inositol 3-phosphate in a NAD-dependent manner. The chain is Inositol-3-phosphate synthase 1 from Bacteroides thetaiotaomicron (strain ATCC 29148 / DSM 2079 / JCM 5827 / CCUG 10774 / NCTC 10582 / VPI-5482 / E50).